A 20-amino-acid polypeptide reads, in one-letter code: Sperm acrosome membrane-associated protein 3, processed form (20 aa).

It belongs to the glycosyl hydrolase 22 family.

In terms of biological role, sperm surface membrane protein that may be involved in sperm-egg plasma membrane adhesion and fusion during fertilization. It could be a potential receptor for the egg oligosaccharide residue N-acetylglucosamine, which is present in the extracellular matrix over the egg plasma membrane. The protein is Sperm acrosome membrane-associated protein 3, processed form (SPACA3) of Vulpes vulpes (Red fox).